The sequence spans 252 residues: MAADKVDPIHQFHIIKLVPINIGGYDLSFTNSALFMVATVVVAAAFLFLTTSSRSLVPGRLQSISEMAYEFVANMLRDAAGTQGMKFFPLVFSLFMFVLVANLLGLFPYFFTVTSHIIVTFGLAILVIGTVIVYGFMKHGLGFLKLFVPKGVPLVMMVLVVPIEVISFVSRPISLSVRLFANMLAGHITLKVFSGFVVSLSALGAVGVAGSILPLAMAVALTALELLVAFLQAYVFAVLTCMYLNDALHPSH.

The next 6 membrane-spanning stretches (helical) occupy residues 29–49 (FTNS…FLFL), 87–107 (FFPL…LGLF), 117–137 (IIVT…YGFM), 146–166 (LFVP…IEVI), 188–208 (ITLK…AVGV), and 211–231 (SILP…VAFL).

The protein belongs to the ATPase A chain family. As to quaternary structure, F-type ATPases have 2 components, CF(1) - the catalytic core - and CF(0) - the membrane proton channel. CF(1) has five subunits: alpha(3), beta(3), gamma(1), delta(1), epsilon(1). CF(0) has three main subunits: a(1), b(2) and c(9-12). The alpha and beta chains form an alternating ring which encloses part of the gamma chain. CF(1) is attached to CF(0) by a central stalk formed by the gamma and epsilon chains, while a peripheral stalk is formed by the delta and b chains.

It is found in the cell inner membrane. Key component of the proton channel; it plays a direct role in the translocation of protons across the membrane. The protein is ATP synthase subunit a of Mesorhizobium japonicum (strain LMG 29417 / CECT 9101 / MAFF 303099) (Mesorhizobium loti (strain MAFF 303099)).